The chain runs to 311 residues: Meteorin-like protein (311 aa).

The N-terminal stretch at 1-45 (MRGAVWAARRRAGQQWPRSPGPGPGPPPPPPLLLLLLLLLGGASA) is a signal peptide. A disulfide bond links cysteine 52 and cysteine 75. N-linked (GlcNAc...) asparagine glycosylation occurs at asparagine 103. Intrachain disulfides connect cysteine 107/cysteine 143, cysteine 188/cysteine 260, cysteine 191/cysteine 284, and cysteine 201/cysteine 306.

This sequence belongs to the meteorin family. N-glycosylated. As to expression, highly expressed in subcutaneous adipose tissue.

The protein resides in the secreted. Functionally, hormone induced following exercise or cold exposure that promotes energy expenditure. Induced either in the skeletal muscle after exercise or in adipose tissue following cold exposure and is present in the circulation. Able to stimulate energy expenditure associated with the browning of the white fat depots and improves glucose tolerance. Does not promote an increase in a thermogenic gene program via direct action on adipocytes, but acts by stimulating several immune cell subtypes to enter the adipose tissue and activate their prothermogenic actions. Stimulates an eosinophil-dependent increase in IL4 expression and promotes alternative activation of adipose tissue macrophages, which are required for the increased expression of the thermogenic and anti-inflammatory gene programs in fat. Required for some cold-induced thermogenic responses, suggesting a role in metabolic adaptations to cold temperatures. The polypeptide is Meteorin-like protein (Metrnl) (Mus musculus (Mouse)).